Reading from the N-terminus, the 421-residue chain is Tol-Pal system protein TolB (421 aa).

An N-terminal signal peptide occupies residues 1–16; it reads MRILVFLWLGLSSLFA.

This sequence belongs to the TolB family. In terms of assembly, the Tol-Pal system is composed of five core proteins: the inner membrane proteins TolA, TolQ and TolR, the periplasmic protein TolB and the outer membrane protein Pal. They form a network linking the inner and outer membranes and the peptidoglycan layer.

Its subcellular location is the periplasm. Part of the Tol-Pal system, which plays a role in outer membrane invagination during cell division and is important for maintaining outer membrane integrity. The protein is Tol-Pal system protein TolB of Wolinella succinogenes (strain ATCC 29543 / DSM 1740 / CCUG 13145 / JCM 31913 / LMG 7466 / NCTC 11488 / FDC 602W) (Vibrio succinogenes).